A 320-amino-acid polypeptide reads, in one-letter code: Transaldolase (320 aa).

The active-site Schiff-base intermediate with substrate is Lys126.

This sequence belongs to the transaldolase family. Type 1 subfamily. In terms of assembly, homodimer.

It localises to the cytoplasm. It carries out the reaction D-sedoheptulose 7-phosphate + D-glyceraldehyde 3-phosphate = D-erythrose 4-phosphate + beta-D-fructose 6-phosphate. Its pathway is carbohydrate degradation; pentose phosphate pathway; D-glyceraldehyde 3-phosphate and beta-D-fructose 6-phosphate from D-ribose 5-phosphate and D-xylulose 5-phosphate (non-oxidative stage): step 2/3. Functionally, transaldolase is important for the balance of metabolites in the pentose-phosphate pathway. This chain is Transaldolase, found in Bordetella pertussis (strain Tohama I / ATCC BAA-589 / NCTC 13251).